The following is a 987-amino-acid chain: Leucine--tRNA ligase (987 aa).

Positions proline 69 to histidine 80 match the 'HIGH' region motif. The short motif at lysine 760 to serine 764 is the 'KMSKS' region element. Residue lysine 763 coordinates ATP.

This sequence belongs to the class-I aminoacyl-tRNA synthetase family.

The protein resides in the cytoplasm. The catalysed reaction is tRNA(Leu) + L-leucine + ATP = L-leucyl-tRNA(Leu) + AMP + diphosphate. The chain is Leucine--tRNA ligase from Bifidobacterium longum (strain NCC 2705).